A 214-amino-acid chain; its full sequence is 3-isopropylmalate dehydratase small subunit (214 aa).

It belongs to the LeuD family. LeuD type 1 subfamily. As to quaternary structure, heterodimer of LeuC and LeuD.

It carries out the reaction (2R,3S)-3-isopropylmalate = (2S)-2-isopropylmalate. Its pathway is amino-acid biosynthesis; L-leucine biosynthesis; L-leucine from 3-methyl-2-oxobutanoate: step 2/4. Catalyzes the isomerization between 2-isopropylmalate and 3-isopropylmalate, via the formation of 2-isopropylmaleate. The polypeptide is 3-isopropylmalate dehydratase small subunit (Pseudomonas putida (strain GB-1)).